The following is a 347-amino-acid chain: Dihydroorotase (347 aa).

The Zn(2+) site is built by His-17 and His-19. Substrate-binding positions include 19 to 21 (HVR) and Asn-45. Residues Lys-102, His-139, and His-177 each coordinate Zn(2+). The residue at position 102 (Lys-102) is an N6-carboxylysine. Position 139 (His-139) interacts with substrate. Leu-222 is a binding site for substrate. Asp-250 contributes to the Zn(2+) binding site. Asp-250 is a catalytic residue. Substrate contacts are provided by His-254 and Ala-266.

This sequence belongs to the metallo-dependent hydrolases superfamily. DHOase family. Class II DHOase subfamily. In terms of assembly, homodimer. Zn(2+) is required as a cofactor.

The catalysed reaction is (S)-dihydroorotate + H2O = N-carbamoyl-L-aspartate + H(+). The protein operates within pyrimidine metabolism; UMP biosynthesis via de novo pathway; (S)-dihydroorotate from bicarbonate: step 3/3. Its function is as follows. Catalyzes the reversible cyclization of carbamoyl aspartate to dihydroorotate. In Acidovorax sp. (strain JS42), this protein is Dihydroorotase.